The primary structure comprises 192 residues: Putative integrase/recombinase y4gC (192 aa).

Residues 1 to 183 (MPSILERDQI…ATEDLRAIAL (183 aa)) enclose the Tyr recombinase domain. Catalysis depends on residues Arg-41, Lys-66, His-135, Arg-138, and His-161. Tyr-170 serves as the catalytic O-(3'-phospho-DNA)-tyrosine intermediate.

It belongs to the 'phage' integrase family.

The protein is Putative integrase/recombinase y4gC of Sinorhizobium fredii (strain NBRC 101917 / NGR234).